The chain runs to 107 residues: Universal stress protein B homolog (107 aa).

Helical transmembrane passes span 6 to 25 and 89 to 106; these read TILF…YVTA and LFIL…VAFM.

The protein belongs to the universal stress protein B family.

The protein localises to the cell inner membrane. The sequence is that of Universal stress protein B homolog from Vibrio cholerae serotype O1 (strain ATCC 39541 / Classical Ogawa 395 / O395).